We begin with the raw amino-acid sequence, 212 residues long: Bcl-2-related ovarian killer protein (212 aa).

Ser-7 carries the post-translational modification Phosphoserine. The interactions with ITPR1 stretch occupies residues 15–45 (MDAFDRSPTDKELVAQAKALGREYVHARLLR). Glycyl lysine isopeptide (Lys-Gly) (interchain with G-Cter in ubiquitin) cross-links involve residues Lys-25 and Lys-32. Residues 32–44 (KALGREYVHARLL) carry the BH4 motif. The short motif at 66–82 (VCAVLLRLGDELEMIRP) is the BH3 element. A nuclear export signal region spans residues 70 to 78 (LLRLGDELE). Positions 112–131 (HIFSAGITWGKVVSLYAVAA) match the BH1 motif. Glycyl lysine isopeptide (Lys-Gly) (interchain with G-Cter in ubiquitin) cross-links involve residues Lys-159 and Lys-176. Residues 164-178 (WLRRRGGWTDVLKCV) carry the BH2 motif. Residues 189–209 (WLVAALCSFGRFLKAAFFVLL) form a helical membrane-spanning segment.

Belongs to the Bcl-2 family. Monomer; positively regulates apoptotic process. Homodimer. Heterodimer. Oligomer; promoted by apoptotic stimuli and BH3-only proteins; mediates constitutive activation. Interacts (via BH4 domain) with ITPR1; enhances BOK expression and stabilization; limits apoptosis and prevents ubiquitination and then degradation; protects ITPR1 from proteolysis by CASP3 during apoptosis. Interacts with ITPR2 and ITPR3; binds most strongly to ITPR2, and barely to ITPR3; regulates their expression. Interacts with XPO1; translocates to the cytoplasm. Interacts with BNIP3; promotes oligomerization. Ubiquitinated by AMFR/gp78 E3 ubiquitin ligase complex; mediates degradation by ubiquitin-proteasome pathway in a VCP/p97-dependent manner; prevents from pro-apoptotic activity; promotes degradation of newly synthesized proteins that are not ITPR1 associated. As to expression, expressed mainly in oocytes; weak expression in granulosa cells of the developing follicles. In adult human ovaries, expressed in granulosa cells at all follicular stages, but expression in primordial/primary follicles granulosa cell is stronger than in secondary and antral follicles.

It is found in the mitochondrion membrane. The protein resides in the endoplasmic reticulum membrane. Its subcellular location is the mitochondrion inner membrane. It localises to the cytoplasm. The protein localises to the nucleus. It is found in the mitochondrion. The protein resides in the endoplasmic reticulum. Its subcellular location is the mitochondrion outer membrane. It localises to the early endosome membrane. The protein localises to the recycling endosome membrane. It is found in the nucleus outer membrane. The protein resides in the golgi apparatus. Its subcellular location is the cis-Golgi network membrane. It localises to the trans-Golgi network membrane. The protein localises to the membrane. Functionally, apoptosis regulator that functions through different apoptotic signaling pathways. Plays a roles as pro-apoptotic protein that positively regulates intrinsic apoptotic process in a BAX- and BAK1-dependent manner or in a BAX- and BAK1-independent manner. In response to endoplasmic reticulum stress promotes mitochondrial apoptosis through downstream BAX/BAK1 activation and positive regulation of PERK-mediated unfolded protein response. Activates apoptosis independently of heterodimerization with survival-promoting BCL2 and BCL2L1 through induction of mitochondrial outer membrane permeabilization, in a BAX- and BAK1-independent manner, in response to inhibition of ERAD-proteasome degradation system, resulting in cytochrome c release. In response to DNA damage, mediates intrinsic apoptotic process in a TP53-dependent manner. Plays a role in granulosa cell apoptosis by CASP3 activation. Plays a roles as anti-apoptotic protein during neuronal apoptotic process, by negatively regulating poly ADP-ribose polymerase-dependent cell death through regulation of neuronal calcium homeostasis and mitochondrial bioenergetics in response to NMDA excitation. In addition to its role in apoptosis, may regulate trophoblast cell proliferation during the early stages of placental development, by acting on G1/S transition through regulation of CCNE1 expression. May also play a role as an inducer of autophagy by disrupting interaction between MCL1 and BECN1. Its function is as follows. Pro-apoptotic molecule exerting its function through the mitochondrial pathway. This chain is Bcl-2-related ovarian killer protein, found in Homo sapiens (Human).